A 104-amino-acid chain; its full sequence is Large ribosomal subunit protein uL24 (104 aa).

The protein belongs to the universal ribosomal protein uL24 family. Part of the 50S ribosomal subunit.

Functionally, one of two assembly initiator proteins, it binds directly to the 5'-end of the 23S rRNA, where it nucleates assembly of the 50S subunit. Its function is as follows. One of the proteins that surrounds the polypeptide exit tunnel on the outside of the subunit. The polypeptide is Large ribosomal subunit protein uL24 (Pseudomonas fluorescens (strain SBW25)).